The primary structure comprises 343 residues: Phenylalanine--tRNA ligase alpha subunit (343 aa).

Residue Glu-268 participates in Mg(2+) binding.

It belongs to the class-II aminoacyl-tRNA synthetase family. Phe-tRNA synthetase alpha subunit type 1 subfamily. Tetramer of two alpha and two beta subunits. Mg(2+) is required as a cofactor.

It is found in the cytoplasm. It carries out the reaction tRNA(Phe) + L-phenylalanine + ATP = L-phenylalanyl-tRNA(Phe) + AMP + diphosphate + H(+). This is Phenylalanine--tRNA ligase alpha subunit from Cupriavidus necator (strain ATCC 17699 / DSM 428 / KCTC 22496 / NCIMB 10442 / H16 / Stanier 337) (Ralstonia eutropha).